Consider the following 932-residue polypeptide: Protocadherin gamma-A2 (932 aa).

The N-terminal stretch at 1 to 28 is a signal peptide; that stretch reads MAALQKLPHCRKLVLLCFLLATLWEARA. 6 consecutive Cadherin domains span residues 29-133, 134-242, 243-347, 348-452, 453-562, and 570-682; these read GQIR…APRF, GVEE…APVF, TQPE…APEF, YMTS…APAF, SRTS…APEI, and DGST…EPSA. The Extracellular portion of the chain corresponds to 29–692; it reads GQIRYSVREE…IPNDSDLTLY (664 aa). 2 N-linked (GlcNAc...) asparagine glycosylation sites follow: Asn-419 and Asn-545. N-linked (GlcNAc...) asparagine glycosylation is present at Asn-685. A helical transmembrane segment spans residues 693 to 713; that stretch reads LVVAVAAVSCVFLAFVIVLLA. The Cytoplasmic segment spans residues 714-932; that stretch reads HRLRRWHKSR…KKKSGKKEKK (219 aa). 2 disordered regions span residues 798–841 and 902–932; these read LEEE…WPNN and ATLT…KEKK. A compositionally biased stretch (polar residues) spans 806–841; sequence FSQQAPPNTDWRFSQAQRPGTSGSQNGDDTGTWPNN. The segment covering 922 to 932 has biased composition (basic residues); that stretch reads NKKKSGKKEKK.

It localises to the cell membrane. Potential calcium-dependent cell-adhesion protein. May be involved in the establishment and maintenance of specific neuronal connections in the brain. The protein is Protocadherin gamma-A2 (PCDHGA2) of Homo sapiens (Human).